Here is a 343-residue protein sequence, read N- to C-terminus: Major histocompatibility complex class I-related protein 1 (343 aa).

The signal sequence occupies residues 1–18 (MMFLLPFLTVFLAKQSHT). Residues 19–105 (RTHSLRYFRL…RHLQRHYNHS (87 aa)) are alpha-1. The antigen-binding cleft stretch occupies residues 19–197 (RTHSLRYFRL…EYGSDALERT (179 aa)). At 19-298 (RTHSLRYFRL…QESGNTLLVA (280 aa)) the chain is on the extracellular side. 8-(9H-purin-6-yl)-2-oxa-8-azabicyclo[3.3.1]nona-3,6-diene-4,6-dicarbaldehyde-binding residues include Y25 and R27. 5-(2-oxoethylideneamino)-6-(D-ribitylamino)uracil-binding residues include R27, S42, and K61. Residues R27, S42, and K61 each contribute to the 5-(2-oxopropylideneamino)-6-(D-ribitylamino)uracil site. 7-hydroxy-6-methyl-8-(1-D-ribityl)lumazine contacts are provided by R27, S42, and K61. Positions 61 and 76 each coordinate 8-(9H-purin-6-yl)-2-oxa-8-azabicyclo[3.3.1]nona-3,6-diene-4,6-dicarbaldehyde. K61 contributes to the 2-amino-4-oxopteridine-6-carbaldehyde binding site. K61 contacts pyridoxal. Residue N103 is glycosylated (N-linked (GlcNAc...) asparagine). The interval 106 to 197 (GLHTYQRMIG…EYGSDALERT (92 aa)) is alpha-2. Position 112 (R112) interacts with 8-(9H-purin-6-yl)-2-oxa-8-azabicyclo[3.3.1]nona-3,6-diene-4,6-dicarbaldehyde. 5-(2-oxoethylideneamino)-6-(D-ribitylamino)uracil is bound by residues R112, Y170, and Q171. Residues R112, Y170, and Q171 each contribute to the 5-(2-oxopropylideneamino)-6-(D-ribitylamino)uracil site. Residues R112, Y170, and Q171 each contribute to the 7-hydroxy-6-methyl-8-(1-D-ribityl)lumazine site. 2 cysteine pairs are disulfide-bonded: C116-C179 and C218-C274. The tract at residues 198–289 (EHPVVRTTRK…GLQMVLEAPQ (92 aa)) is alpha-3. Residues 200 to 302 (PVVRTTRKET…NTLLVANTIS (103 aa)) enclose the Ig-like C1-type domain. The connecting peptide stretch occupies residues 290-298 (ESGNTLLVA). A helical transmembrane segment spans residues 299–319 (NTISGTIILIIVLAGVGALIW). Over 320–343 (RRRSREPKEVMYQPTQVNEGSSPS) the chain is Cytoplasmic.

As to quaternary structure, heterotrimer that consists of MR1, B2M and metabolite antigen. Major classes of metabolite ligands presented by MR1 include riboflavin-related antigens, pyrimidines and ribityl lumazines, nucleobase adducts and folate derivatives. Forms reversible covalent Schiff base complexes with microbial pyrimidine-based metabolite, which serves as a molecular switch triggering complete folding, stable association with B2M and translocation of the ternary complex from endoplasmic reticulum to the plasma membrane. Alternatively, forms non-Schiff base complexes with ribityl lumazines. On antigen-presenting cells, the ternary complex interacts with TCR on MR1-restricted T cells. Interacts with TAPBP and TAPBPL chaperones in the endoplasmic reticulum. TAPBP associated or not with MHC class I peptide loading complex binds ligand-free MR1 or MR1-B2M complex, providing for stable MR1 pools ready for metabolite antigen processing. TAPBPL interacts with MR1 in a ligand-independent way; this interaction may stabilize MR1 pool and facilitate ligand loading and dissociation. Structurally, MR1-B2M heterodimer adopts a topology similar to classical MHC class I molecules, with alpha-1 and alpha-2 domains of MR1 forming the antigen-binding cleft composed of two alpha-helices resting on a floor of 7-stranded anti-parallel beta-pleated sheet. MR1-B2M heterodimer (via alpha-helices) interacts with TCR (via CDR domains). Post-translationally, N-glycosylated. In terms of tissue distribution, expressed in kidney, liver, testis, spleen, thymus, brain, and heart.

It is found in the cell membrane. Its subcellular location is the endoplasmic reticulum membrane. It localises to the golgi apparatus membrane. The protein resides in the early endosome membrane. The protein localises to the late endosome membrane. Functionally, antigen-presenting molecule specialized in displaying microbial pyrimidine-based metabolites to alpha-beta T cell receptors (TCR) on innate-type mucosal-associated invariant T (MAIT) cells. In complex with B2M preferentially presents riboflavin-derived metabolites to semi-invariant TCRs on MAIT cells, guiding immune surveillance of the microbial metabolome at mucosal epithelial barriers. Signature pyrimidine-based microbial antigens are generated via non-enzymatic condensation of metabolite intermediates of the riboflavin pathway with by-products arising from other metabolic pathways such as glycolysis. Typical potent antigenic metabolites are 5-(2-oxoethylideneamino)-6-D-ribitylaminouracil (5-OE-RU) and 5-(2-oxopropylideneamino)-6-D-ribitylaminouracil (5-OP-RU), products of condensation of 5-amino-6-D-ribityaminouracil (5-A-RU) with glyoxal or methylglyoxal by-products, respectively. May present microbial antigens to various MAIT cell subsets, providing for unique recognition of diverse microbes, including pathogens that do not synthesize riboflavin. Upon antigen recognition, elicits rapid innate-type MAIT cell activation to eliminate pathogenic microbes by directly killing infected cells. During T cell development, drives thymic selection and post-thymic terminal differentiation of MAIT cells in a process dependent on commensal microflora. Acts as an immune sensor of cancer cell metabolome. May present a tumor-specific or -associated metabolite essential for cancer cell survival to a pan-cancer TCR on a non-MAIT CD8-positive T cell clone, triggering T cell-mediated killing of a wide range of cancer cell types. May present tumor-enriched pyridoxal and pyridoxal 5'-phosphate antigens, enabling preferential recognition of cancer cells. Presents nucleobase carbonyl adducts generated during oxidative stress. Captures M3Ade, a nucleobase adduct composed of one adenine modified by a malondialdehyde trimer, for recognition by MR1-restricted T cell clones expressing a polyclonal TCR repertoire. The chain is Major histocompatibility complex class I-related protein 1 from Rattus norvegicus (Rat).